Reading from the N-terminus, the 264-residue chain is S-adenosylmethionine decarboxylase proenzyme (264 aa).

Catalysis depends on S112, which acts as the Schiff-base intermediate with substrate; via pyruvic acid. Position 112 is a pyruvic acid (Ser); by autocatalysis (S112). H117 acts as the Proton acceptor; for processing activity in catalysis. C140 (proton donor; for catalytic activity) is an active-site residue.

This sequence belongs to the prokaryotic AdoMetDC family. Type 2 subfamily. In terms of assembly, heterooctamer of four alpha and four beta chains arranged as a tetramer of alpha/beta heterodimers. It depends on pyruvate as a cofactor. Is synthesized initially as an inactive proenzyme. Formation of the active enzyme involves a self-maturation process in which the active site pyruvoyl group is generated from an internal serine residue via an autocatalytic post-translational modification. Two non-identical subunits are generated from the proenzyme in this reaction, and the pyruvate is formed at the N-terminus of the alpha chain, which is derived from the carboxyl end of the proenzyme. The post-translation cleavage follows an unusual pathway, termed non-hydrolytic serinolysis, in which the side chain hydroxyl group of the serine supplies its oxygen atom to form the C-terminus of the beta chain, while the remainder of the serine residue undergoes an oxidative deamination to produce ammonia and the pyruvoyl group blocking the N-terminus of the alpha chain.

It catalyses the reaction S-adenosyl-L-methionine + H(+) = S-adenosyl 3-(methylsulfanyl)propylamine + CO2. The protein operates within amine and polyamine biosynthesis; S-adenosylmethioninamine biosynthesis; S-adenosylmethioninamine from S-adenosyl-L-methionine: step 1/1. In terms of biological role, catalyzes the decarboxylation of S-adenosylmethionine to S-adenosylmethioninamine (dcAdoMet), the propylamine donor required for the synthesis of the polyamines spermine and spermidine from the diamine putrescine. This Serratia proteamaculans (strain 568) protein is S-adenosylmethionine decarboxylase proenzyme.